Consider the following 69-residue polypeptide: DNA-directed RNA polymerase subunit omega (69 aa).

The protein belongs to the RNA polymerase subunit omega family. The RNAP catalytic core consists of 2 alpha, 1 beta, 1 beta' and 1 omega subunit. When a sigma factor is associated with the core the holoenzyme is formed, which can initiate transcription.

It catalyses the reaction RNA(n) + a ribonucleoside 5'-triphosphate = RNA(n+1) + diphosphate. Functionally, promotes RNA polymerase assembly. Latches the N- and C-terminal regions of the beta' subunit thereby facilitating its interaction with the beta and alpha subunits. This chain is DNA-directed RNA polymerase subunit omega, found in Geotalea uraniireducens (strain Rf4) (Geobacter uraniireducens).